The primary structure comprises 274 residues: Envelope glycoprotein L (274 aa).

A signal peptide spans methionine 1–serine 21. One can recognise a gL betaherpesvirus-type domain in the interval valine 51–valine 251. A disulfide bridge connects residues cysteine 156 and cysteine 161.

It belongs to the herpesviridae glycoprotein L (gL) family. Betaherpesvirinae gL subfamily. Interacts with glycoprotein H (gH); this interaction is necessary for the correct processing and cell surface expression of gH.

Its subcellular location is the virion membrane. The protein localises to the host cell membrane. The protein resides in the host Golgi apparatus. It is found in the host trans-Golgi network. Its function is as follows. The heterodimer glycoprotein H-glycoprotein L is required for the fusion of viral and plasma membranes leading to virus entry into the host cell. Acts as a functional inhibitor of gH and maintains gH in an inhibited form. Upon binding to host integrins, gL dissociates from gH leading to activation of the viral fusion glycoproteins gB and gH. This is Envelope glycoprotein L from Mus musculus (Mouse).